A 274-amino-acid chain; its full sequence is Diaminopimelate epimerase (274 aa).

Substrate contacts are provided by N11, Q44, and N64. C73 functions as the Proton donor in the catalytic mechanism. Substrate is bound by residues 74–75, N157, N190, and 208–209; these read GN and ER. The Proton acceptor role is filled by C217. Substrate is bound at residue 218 to 219; it reads GS.

It belongs to the diaminopimelate epimerase family. In terms of assembly, homodimer.

It localises to the cytoplasm. The enzyme catalyses (2S,6S)-2,6-diaminopimelate = meso-2,6-diaminopimelate. Its pathway is amino-acid biosynthesis; L-lysine biosynthesis via DAP pathway; DL-2,6-diaminopimelate from LL-2,6-diaminopimelate: step 1/1. Catalyzes the stereoinversion of LL-2,6-diaminopimelate (L,L-DAP) to meso-diaminopimelate (meso-DAP), a precursor of L-lysine and an essential component of the bacterial peptidoglycan. The polypeptide is Diaminopimelate epimerase (Serratia proteamaculans (strain 568)).